The following is a 156-amino-acid chain: 6,7-dimethyl-8-ribityllumazine synthase (156 aa).

Residues Phe-22, 57–59, and 81–83 contribute to the 5-amino-6-(D-ribitylamino)uracil site; these read AYE and TVI. 86-87 lines the (2S)-2-hydroxy-3-oxobutyl phosphate pocket; it reads GT. His-89 functions as the Proton donor in the catalytic mechanism. Phe-114 provides a ligand contact to 5-amino-6-(D-ribitylamino)uracil. Arg-128 is a (2S)-2-hydroxy-3-oxobutyl phosphate binding site.

The protein belongs to the DMRL synthase family. Forms an icosahedral capsid composed of 60 subunits, arranged as a dodecamer of pentamers.

It carries out the reaction (2S)-2-hydroxy-3-oxobutyl phosphate + 5-amino-6-(D-ribitylamino)uracil = 6,7-dimethyl-8-(1-D-ribityl)lumazine + phosphate + 2 H2O + H(+). Its pathway is cofactor biosynthesis; riboflavin biosynthesis; riboflavin from 2-hydroxy-3-oxobutyl phosphate and 5-amino-6-(D-ribitylamino)uracil: step 1/2. Its function is as follows. Catalyzes the formation of 6,7-dimethyl-8-ribityllumazine by condensation of 5-amino-6-(D-ribitylamino)uracil with 3,4-dihydroxy-2-butanone 4-phosphate. This is the penultimate step in the biosynthesis of riboflavin. The polypeptide is 6,7-dimethyl-8-ribityllumazine synthase (Photorhabdus laumondii subsp. laumondii (strain DSM 15139 / CIP 105565 / TT01) (Photorhabdus luminescens subsp. laumondii)).